Consider the following 236-residue polypeptide: Large ribosomal subunit protein uL3 (236 aa).

Belongs to the universal ribosomal protein uL3 family. As to quaternary structure, part of the 50S ribosomal subunit. Forms a cluster with proteins L14 and L19.

In terms of biological role, one of the primary rRNA binding proteins, it binds directly near the 3'-end of the 23S rRNA, where it nucleates assembly of the 50S subunit. This is Large ribosomal subunit protein uL3 from Mycoplasmoides gallisepticum (strain R(low / passage 15 / clone 2)) (Mycoplasma gallisepticum).